The chain runs to 309 residues: Porphobilinogen deaminase (309 aa).

Position 241 is an S-(dipyrrolylmethanemethyl)cysteine (cysteine 241).

It belongs to the HMBS family. As to quaternary structure, monomer. Requires dipyrromethane as cofactor.

The enzyme catalyses 4 porphobilinogen + H2O = hydroxymethylbilane + 4 NH4(+). It functions in the pathway porphyrin-containing compound metabolism; protoporphyrin-IX biosynthesis; coproporphyrinogen-III from 5-aminolevulinate: step 2/4. Functionally, tetrapolymerization of the monopyrrole PBG into the hydroxymethylbilane pre-uroporphyrinogen in several discrete steps. The polypeptide is Porphobilinogen deaminase (Campylobacter concisus (strain 13826)).